Here is a 445-residue protein sequence, read N- to C-terminus: 6-phosphogluconate dehydrogenase, decarboxylating (445 aa).

NADP(+) is bound by residues 1 to 4, 22 to 24, 63 to 65, and Asn-91; these read AVMG, NRS, and VKA. Residues Asn-91 and 117–119 contribute to the substrate site; that span reads SGG. The Proton acceptor role is filled by Lys-172. 175-176 lines the substrate pocket; sequence HN. Glu-179 acts as the Proton donor in catalysis. Residues Tyr-180, Lys-249, Arg-276, Arg-434, and His-440 each contribute to the substrate site.

It belongs to the 6-phosphogluconate dehydrogenase family. In terms of assembly, homodimer.

It carries out the reaction 6-phospho-D-gluconate + NADP(+) = D-ribulose 5-phosphate + CO2 + NADPH. Its pathway is carbohydrate degradation; pentose phosphate pathway; D-ribulose 5-phosphate from D-glucose 6-phosphate (oxidative stage): step 3/3. In terms of biological role, catalyzes the oxidative decarboxylation of 6-phosphogluconate to ribulose 5-phosphate and CO(2), with concomitant reduction of NADP to NADPH. This Shigella boydii protein is 6-phosphogluconate dehydrogenase, decarboxylating (gnd).